Consider the following 1293-residue polypeptide: Late blight resistance protein R1-A (1293 aa).

Coiled-coil stretches lie at residues 423–446 (RYSDSLDFLKNQLQVIQTEFESLQ) and 538–560 (PRMNEEIVGFEDVIENLRKKLLN). The 288-residue stretch at 539–826 (RMNEEIVGFE…SEAFIKSSEG (288 aa)) folds into the NB-ARC domain. Residue 572–579 (GMPGLGKT) participates in ATP binding. LRR repeat units follow at residues 876–899 (AEENFLLWINRDQITKPSSCVYSH), 956–981 (FKFLKVLDLEHRVFIDFIPTELVYLK), 1027–1049 (MVKLRHLYIPDFSTRIEAALLEN), 1056–1079 (LETLSTLYFSRVEDAELMLRKTPN), 1102–1125 (PIRLEILKLYRSKFKTIPFCISAP), 1149–1172 (LKHLEVLILYKVEFGDHREWKVSN), 1175–1197 (FPQLKILKLEYLSLVKWIVADDA), 1198–1222 (FPNLEQLVLRGCQDLMEIPSCFMDI), and 1235–1259 (ESVVKSALNIQETQVEDYQNTNFKL).

It belongs to the disease resistance NB-LRR family.

The protein localises to the cytoplasm. It is found in the membrane. In terms of biological role, confers resistance to late blight (Phytophthora infestans) races carrying the avirulence gene Avr1. Resistance proteins guard the plant against pathogens that contain an appropriate avirulence protein via an indirect interaction with this avirulence protein. That triggers a defense system including the hypersensitive response, which restricts the pathogen growth. In Solanum demissum (Wild potato), this protein is Late blight resistance protein R1-A (R1A).